The following is a 1445-amino-acid chain: CD109 antigen (1445 aa).

The N-terminal stretch at 1–21 (MQGPPLLTAAHLLCVCTAALA) is a signal peptide. Residues N68, N118, N247, N279, N365, N419, N513, and N645 are each glycosylated (N-linked (GlcNAc...) asparagine). Residues 593–702 (DKSVNLMNAS…TWIWLDTNMG (110 aa)) form a bait region (approximate) region. The isoglutamyl cysteine thioester (Cys-Gln) cross-link spans 921-924 (CGEQ). 2 N-linked (GlcNAc...) asparagine glycosylation sites follow: N1086 and N1355. Residue A1420 is the site of GPI-anchor amidated alanine attachment. Positions 1421 to 1445 (SGSHHHSSVIFIFCFKLLYFMELWL) are cleaved as a propeptide — removed in mature form.

This sequence belongs to the protease inhibitor I39 (alpha-2-macroglobulin) family. In terms of assembly, heterodimer; disulfide-linked. Interacts with TGFB1 and TGFBR1. Forms a heteromeric complex with TGFBR1, TGFBR2 and TGFBR3 in a ligand-independent manner. Post-translationally, N-glycosylated. 2 forms of 150 (p150) and 120 kDa (p120) exist due to proteolytic degradation from a 180 kDa form. Widely expressed with high level in uterus, aorta, heart, lung, trachea, placenta and in fetal heart, kidney, liver, spleen and lung. Expressed by CD34(+) acute myeloid leukemia cell lines, T-cell lines, activated T-lymphoblasts, endothelial cells and activated platelets. Isoform 4 is expressed in placenta. Isoform 1 is expressed in keratinocytes and placenta.

It is found in the cell membrane. Modulates negatively TGFB1 signaling in keratinocytes. The polypeptide is CD109 antigen (CD109) (Homo sapiens (Human)).